We begin with the raw amino-acid sequence, 243 residues long: 1-(5-phosphoribosyl)-5-[(5-phosphoribosylamino)methylideneamino] imidazole-4-carboxamide isomerase (243 aa).

The Proton acceptor role is filled by Asp-8. Catalysis depends on Asp-130, which acts as the Proton donor.

It belongs to the HisA/HisF family.

The protein localises to the cytoplasm. The enzyme catalyses 1-(5-phospho-beta-D-ribosyl)-5-[(5-phospho-beta-D-ribosylamino)methylideneamino]imidazole-4-carboxamide = 5-[(5-phospho-1-deoxy-D-ribulos-1-ylimino)methylamino]-1-(5-phospho-beta-D-ribosyl)imidazole-4-carboxamide. The protein operates within amino-acid biosynthesis; L-histidine biosynthesis; L-histidine from 5-phospho-alpha-D-ribose 1-diphosphate: step 4/9. In Acinetobacter baumannii (strain SDF), this protein is 1-(5-phosphoribosyl)-5-[(5-phosphoribosylamino)methylideneamino] imidazole-4-carboxamide isomerase.